The primary structure comprises 208 residues: Putative archaetidylserine decarboxylase proenzyme (208 aa).

Catalysis depends on serine 172, which acts as the Schiff-base intermediate with substrate; via pyruvic acid. Serine 172 carries the pyruvic acid (Ser); by autocatalysis modification.

This sequence belongs to the phosphatidylserine decarboxylase family. PSD-A subfamily. Heterodimer of a large membrane-associated beta subunit and a small pyruvoyl-containing alpha subunit. The cofactor is pyruvate. Post-translationally, is synthesized initially as an inactive proenzyme. Formation of the active enzyme involves a self-maturation process in which the active site pyruvoyl group is generated from an internal serine residue via an autocatalytic post-translational modification. Two non-identical subunits are generated from the proenzyme in this reaction, and the pyruvate is formed at the N-terminus of the alpha chain, which is derived from the carboxyl end of the proenzyme. The post-translation cleavage follows an unusual pathway, termed non-hydrolytic serinolysis, in which the side chain hydroxyl group of the serine supplies its oxygen atom to form the C-terminus of the beta chain, while the remainder of the serine residue undergoes an oxidative deamination to produce ammonia and the pyruvoyl prosthetic group on the alpha chain.

The protein resides in the cell membrane. It carries out the reaction archaetidylserine + H(+) = archaetidylethanolamine + CO2. Functionally, catalyzes the formation of archaetidylethanolamine (PtdEtn) from archaetidylserine (PtdSer). This is Putative archaetidylserine decarboxylase proenzyme from Methanosarcina mazei (strain ATCC BAA-159 / DSM 3647 / Goe1 / Go1 / JCM 11833 / OCM 88) (Methanosarcina frisia).